The chain runs to 360 residues: DNA replication and repair protein RecF (360 aa).

Residue 33 to 40 (GENGSGKT) participates in ATP binding.

It belongs to the RecF family.

Its subcellular location is the cytoplasm. The RecF protein is involved in DNA metabolism; it is required for DNA replication and normal SOS inducibility. RecF binds preferentially to single-stranded, linear DNA. It also seems to bind ATP. This Rickettsia bellii (strain OSU 85-389) protein is DNA replication and repair protein RecF.